The sequence spans 339 residues: Inositol 2-dehydrogenase 2 (339 aa).

Belongs to the Gfo/Idh/MocA family. Homotetramer.

The catalysed reaction is myo-inositol + NAD(+) = scyllo-inosose + NADH + H(+). In terms of biological role, involved in the oxidation of myo-inositol (MI) to 2-keto-myo-inositol (2KMI or 2-inosose). The chain is Inositol 2-dehydrogenase 2 from Saccharopolyspora erythraea (strain ATCC 11635 / DSM 40517 / JCM 4748 / NBRC 13426 / NCIMB 8594 / NRRL 2338).